The chain runs to 491 residues: Putative ABC transporter ATP-binding protein TDE_0906 (491 aa).

ABC transporter domains are found at residues 2–241 (INLN…KQGL) and 267–491 (LTLH…KERL). ATP contacts are provided by residues 36 to 43 (GKSGCGKT) and 300 to 307 (GKNGCGKT).

It belongs to the ABC transporter superfamily.

The protein resides in the cell inner membrane. Its function is as follows. Probably part of an ABC transporter complex. Responsible for energy coupling to the transport system. This is Putative ABC transporter ATP-binding protein TDE_0906 from Treponema denticola (strain ATCC 35405 / DSM 14222 / CIP 103919 / JCM 8153 / KCTC 15104).